A 599-amino-acid polypeptide reads, in one-letter code: Sulfite reductase [NADPH] flavoprotein alpha-component (599 aa).

The Flavodoxin-like domain maps to 64–202 (ITIISASQTG…AASEWRARVV (139 aa)). FMN-binding positions include 70–75 (SQTGNA), 117–120 (STQG), and 153–162 (LGDSSYEFFC). Residues 234–448 (DSPLVASLSV…IEHNDNFRLP (215 aa)) enclose the FAD-binding FR-type domain. FAD is bound by residues threonine 322, alanine 356, 386-389 (RLYS), 404-406 (TVG), tyrosine 410, and 419-422 (GGAS). Residues 519-520 (SR), 525-529 (KVYVQ), and aspartate 561 contribute to the NADP(+) site. Residue tyrosine 599 coordinates FAD.

It belongs to the NADPH-dependent sulphite reductase flavoprotein subunit CysJ family. In the N-terminal section; belongs to the flavodoxin family. The protein in the C-terminal section; belongs to the flavoprotein pyridine nucleotide cytochrome reductase family. As to quaternary structure, alpha(8)-beta(8). The alpha component is a flavoprotein, the beta component is a hemoprotein. Requires FAD as cofactor. FMN is required as a cofactor.

It catalyses the reaction hydrogen sulfide + 3 NADP(+) + 3 H2O = sulfite + 3 NADPH + 4 H(+). It participates in sulfur metabolism; hydrogen sulfide biosynthesis; hydrogen sulfide from sulfite (NADPH route): step 1/1. Its function is as follows. Component of the sulfite reductase complex that catalyzes the 6-electron reduction of sulfite to sulfide. This is one of several activities required for the biosynthesis of L-cysteine from sulfate. The flavoprotein component catalyzes the electron flow from NADPH -&gt; FAD -&gt; FMN to the hemoprotein component. The polypeptide is Sulfite reductase [NADPH] flavoprotein alpha-component (Escherichia coli O9:H4 (strain HS)).